The primary structure comprises 750 residues: Photosystem I P700 chlorophyll a apoprotein A1 (750 aa).

8 helical membrane-spanning segments follow: residues 70–93 (VFSA…FHGA), 156–179 (LYCT…FHYH), 195–219 (LNHH…HVSL), 291–309 (IAHH…GHMY), 346–369 (WHAQ…HHMY), 385–411 (LSLF…IFMV), 433–455 (AIIS…LYIH), and 531–549 (FLVH…LILL). Cys-573 and Cys-582 together coordinate [4Fe-4S] cluster. The next 2 helical transmembrane spans lie at 589–610 (HVFL…HFSW) and 664–686 (LSAY…MFLF). Chlorophyll a' is bound at residue His-675. Residues Met-683 and Tyr-691 each coordinate chlorophyll a. A phylloquinone-binding site is contributed by Trp-692. The helical transmembrane segment at 724–744 (AVGVTHYLLGGIATTWAFFLA) threads the bilayer.

This sequence belongs to the PsaA/PsaB family. In terms of assembly, the PsaA/B heterodimer binds the P700 chlorophyll special pair and subsequent electron acceptors. PSI consists of a core antenna complex that captures photons, and an electron transfer chain that converts photonic excitation into a charge separation. The eukaryotic PSI reaction center is composed of at least 11 subunits. The cofactor is P700 is a chlorophyll a/chlorophyll a' dimer, A0 is one or more chlorophyll a, A1 is one or both phylloquinones and FX is a shared 4Fe-4S iron-sulfur center..

The protein localises to the plastid. The protein resides in the chloroplast thylakoid membrane. It carries out the reaction reduced [plastocyanin] + hnu + oxidized [2Fe-2S]-[ferredoxin] = oxidized [plastocyanin] + reduced [2Fe-2S]-[ferredoxin]. In terms of biological role, psaA and PsaB bind P700, the primary electron donor of photosystem I (PSI), as well as the electron acceptors A0, A1 and FX. PSI is a plastocyanin-ferredoxin oxidoreductase, converting photonic excitation into a charge separation, which transfers an electron from the donor P700 chlorophyll pair to the spectroscopically characterized acceptors A0, A1, FX, FA and FB in turn. Oxidized P700 is reduced on the lumenal side of the thylakoid membrane by plastocyanin. This chain is Photosystem I P700 chlorophyll a apoprotein A1, found in Daucus carota (Wild carrot).